The primary structure comprises 432 residues: PC-esterase domain-containing protein 1B (432 aa).

Disordered stretches follow at residues 264 to 293 and 398 to 432; these read EWIK…LSPP and RGFG…PRPQ.

The protein belongs to the PC-esterase family.

This Homo sapiens (Human) protein is PC-esterase domain-containing protein 1B.